The following is a 333-amino-acid chain: Delta(9)-fatty-acid desaturase fat-5 (333 aa).

4 helical membrane passes run 42–62 (NVALFVALHIGALVGLYQLVF), 66–86 (WATVGWVFLLHTLGSMGVTGG), 187–207 (LPLVGIFCFALPTFIPVVLWG), and 210–230 (AFIAFYTAALFRYCFTLHATW).

The protein belongs to the fatty acid desaturase type 1 family. Expressed in the intestine in adult worms and in all four larval stages. Additional expression in the pharynx and tail cells after hatching and throughout the lifespan.

The protein localises to the membrane. The catalysed reaction is hexadecanoyl-CoA + 2 Fe(II)-[cytochrome b5] + O2 + 2 H(+) = (9Z)-hexadecenoyl-CoA + 2 Fe(III)-[cytochrome b5] + 2 H2O. It catalyses the reaction tetradecanoyl-CoA + 2 Fe(II)-[cytochrome b5] + O2 + 2 H(+) = (9Z)-tetradecenoyl-CoA + 2 Fe(III)-[cytochrome b5] + 2 H2O. It carries out the reaction heptadecanoyl-CoA + 2 Fe(II)-[cytochrome b5] + O2 + 2 H(+) = (9Z)-heptadecenoyl-CoA + 2 Fe(III)-[cytochrome b5] + 2 H2O. The enzyme catalyses pentadecanoyl-CoA + 2 Fe(II)-[cytochrome b5] + O2 + 2 H(+) = (9Z)-pentadecenoyl-CoA + 2 Fe(III)-[cytochrome b5] + 2 H2O. It participates in lipid metabolism; monounsaturated fatty acid biosynthesis. Delta(9)-fatty acid desaturase that acts preferentially on palmitoyl-CoA (hexadecanoyl-CoA) producing the monounsaturated palmitoleoyl-CoA ((9Z)-hexadecenoyl-CoA), which can be elongated to (11Z)-octadecenoyl-CoA (the most abundant monounsaturated fatty acid in Caenorhabditis elegans phospholipids and triacylglycerols). Also acts on pentadecanoyl-CoA, heptadecanoyl-CoA and myristoyl-CoA (tetradecanoyl-CoA), the monounsaturated fatty acids (MUFAs) produced are further used as substrates to synthesize polyunsaturated fatty acids (PUFAs) by several other desaturases and elongases. Unlike plants, Caenorhabditis elegans desaturases seem to use fatty acyl-CoAs as substrates. The polypeptide is Delta(9)-fatty-acid desaturase fat-5 (fat-5) (Caenorhabditis elegans).